The sequence spans 73 residues: MKEGIHPKYEDITATCSCGNVIKTRSTIGHDLQLDVCSQCHPFYTGKQKVMDTGGRIDRFQKRFGSRIGGKKG.

Positions 16, 18, 37, and 40 each coordinate Zn(2+).

It belongs to the bacterial ribosomal protein bL31 family. Type A subfamily. As to quaternary structure, part of the 50S ribosomal subunit. Zn(2+) serves as cofactor.

Binds the 23S rRNA. The polypeptide is Large ribosomal subunit protein bL31 (Marinobacter nauticus (strain ATCC 700491 / DSM 11845 / VT8) (Marinobacter aquaeolei)).